Here is a 200-residue protein sequence, read N- to C-terminus: High frequency lysogenization protein HflD homolog (200 aa).

It belongs to the HflD family.

Its subcellular location is the cytoplasm. The protein resides in the cell inner membrane. This chain is High frequency lysogenization protein HflD homolog, found in Pseudoalteromonas translucida (strain TAC 125).